Here is a 264-residue protein sequence, read N- to C-terminus: E3 ubiquitin-protein ligase MARCHF8 (264 aa).

Positions 15–47 (LGHSVSRSSNISKAGSPTSVSAPSRFPRTSVTP) are disordered. The segment covering 16 to 47 (GHSVSRSSNISKAGSPTSVSAPSRFPRTSVTP) has biased composition (polar residues). The RING-CH-type zinc finger occupies 45-106 (VTPSSQDICR…ELCKFEFIME (62 aa)). The Zn(2+) site is built by Cys53, Cys56, Cys70, Cys72, His80, Cys83, Cys96, and Cys99. Transmembrane regions (helical) follow at residues 130–150 (CSVTFHVIAITCVVWSLYVLI) and 170–190 (FWTKLVVVAIGFTGGLLFMYV).

The protein resides in the cytoplasmic vesicle membrane. Its subcellular location is the lysosome membrane. The protein localises to the early endosome membrane. It carries out the reaction S-ubiquitinyl-[E2 ubiquitin-conjugating enzyme]-L-cysteine + [acceptor protein]-L-lysine = [E2 ubiquitin-conjugating enzyme]-L-cysteine + N(6)-ubiquitinyl-[acceptor protein]-L-lysine.. It participates in protein modification; protein ubiquitination. Its function is as follows. E3 ubiquitin-protein ligase that mediates ubiquitination of cd86 and MHC class II proteins, such as hla-dr alpha and beta, and promotes their subsequent endocytosis and sorting to lysosomes via multivesicular bodies. In Xenopus laevis (African clawed frog), this protein is E3 ubiquitin-protein ligase MARCHF8 (marchf8).